Reading from the N-terminus, the 93-residue chain is MSRSIKKGPFVKESLLNKIVEMNKAGDKKVVKTWSRSSTIFPEMIGHTIAVHDGRKHVPVYISEDMVGHKLGEFVLTRTFRGHGNTEKTTSVK.

It belongs to the universal ribosomal protein uS19 family.

Functionally, protein S19 forms a complex with S13 that binds strongly to the 16S ribosomal RNA. In Clostridium acetobutylicum (strain ATCC 824 / DSM 792 / JCM 1419 / IAM 19013 / LMG 5710 / NBRC 13948 / NRRL B-527 / VKM B-1787 / 2291 / W), this protein is Small ribosomal subunit protein uS19.